A 722-amino-acid polypeptide reads, in one-letter code: Delta-like protein 1 (722 aa).

A signal peptide spans 1–17 (MGRRSALALAVVSALLC). Residues 18 to 545 (QVWSSGVFEL…MESQGGPFPW (528 aa)) lie on the Extracellular side of the membrane. The region spanning 176–220 (FVCDEHYYGEGCSVFCRPRDDAFGHFTCGDRGEKMCDPGWKGQYC) is the DSL domain. Disulfide bonds link C178/C187, C191/C203, C211/C220, C225/C236, C229/C242, C244/C253, C256/C267, C262/C273, C275/C284, C291/C303, C297/C313, C315/C324, C331/C342, C336/C351, C353/C362, C369/C380, C374/C390, C392/C401, C408/C419, C413/C428, C430/C439, C446/C457, C451/C466, C468/C477, C484/C495, C489/C504, and C506/C515. 3 consecutive EGF-like domains span residues 225–253 (CLPG…GRYC), 256–284 (CIRY…GLFC), and 291–324 (CTHH…GANC). In terms of domain architecture, EGF-like 4; calcium-binding spans 331–362 (CAPSPCKNGASCTDLEDSFSCTCPPGFYGKVC). EGF-like domains are found at residues 369-401 (CADG…GFNC) and 408-439 (CGSS…GRYC). The EGF-like 7; calcium-binding domain occupies 446–477 (CASSPCANGGTCRDSVNDFSCTCPPGYTGKNC). An N-linked (GlcNAc...) asparagine glycan is attached at N476. In terms of domain architecture, EGF-like 8 spans 484 to 515 (CEHAPCHNGATCHQRGQRYMCECAQGYGGPNC). A helical membrane pass occupies residues 546–568 (VAVCAGVVLVLLLLLGCAAVVVC). At 569-722 (VRLKLQKHQP…KDECVIATEV (154 aa)) the chain is on the cytoplasmic side. K613 is covalently cross-linked (Glycyl lysine isopeptide (Lys-Gly) (interchain with G-Cter in ubiquitin)). Phosphothreonine is present on T638. Basic and acidic residues predominate over residues 655 to 664 (RDTHSKRDTK). Residues 655 to 697 (RDTHSKRDTKCQSQSSAGEEKIAPTLRGGEIPDRKRPESVYST) are disordered. At S693 the chain carries Phosphoserine; by PKB. Position 696 is a phosphoserine (S696). The interaction with MAGI1 stretch occupies residues 719-722 (ATEV).

As to quaternary structure, homodimer. Interacts with TJP1. Interacts with MMP14; inhibits DLL1-induced Notch signaling. Interacts with MAGI1 (via PDZ domain); forms a complex with CTNNB1 and CDH2 and promotes recruitment to the adherens junction and stabilization on the cell surface. Interacts with PSEN1; undergoes a presenilin-dependent gamma-secretase cleavage that releases a Dll1-intracellular form. Interacts with MFAP5. Interacts with MIB1. Interacts with NEURL1B; leads to ubiquitination. Interacts with NEURL1. Interacts with SYNJ2BP; enhances DLL1 protein stability, and promotes Notch signaling in endothelial cells. Interacts with MAGI1, MAGI2, MAGI3 and MPDZ. Interacts (via ubiquitin) with EPN1 (via IUM domain); binding with NOTCH1 attached to neighboring cell, promotes ligand ubiquitination and EPN1 interaction, leading to NECD transendocytosis and Notch signaling. Interacts with NOTCH1. In terms of processing, ubiquitinated by MIB (MIB1 or MIB2), leading to its endocytosis and subsequent degradation. Ubiquitinated; promotes recycling back to the plasma membrane and confers a strong affinity for NOTCH1. Multi-ubiquitination of Lys-613 by MIB1 promotes both cis and trans-interaction with NOTCH1, as well as activation of Notch signaling. Ubiquitinated by NEURL1B. Phosphorylated in a membrane association-dependent manner. Phosphorylation at Ser-696 requires the presence of Ser-693, whereas phosphorylation at Thr-638 and Ser-693 occurs independently of the other sites. Phosphorylation is required for full ligand activity in vitro and affects surface presentation, ectodomain shedding, and endocytosis. Post-translationally, cleaved by MMP14; negatively regulates DLL1-induced Notch signaling in HPCs, modulating B-lymphocyte differentiation in bone marrow. Undergoes two consecutive processing events: a shedding event, partially by ADAM10, that generates a soluble extracellular form and an intracellular membrane-anchored form, followed by a gamma-secretase cleavage releasing an intracellular fragment. In terms of processing, O-fucosylated. Can be elongated to a disaccharide by MFNG. In terms of tissue distribution, in the embryo, expressed in the paraxial mesoderm and nervous system. Expressed at high levels in adult heart and at lower levels, in adult lung. Highly expressed in satellite cells from masseter and tongue than in satellite cells from leg and extraocular muscle.?.

Its subcellular location is the apical cell membrane. The protein resides in the cell junction. It localises to the adherens junction. The protein localises to the membrane raft. It is found in the cell membrane. Its subcellular location is the nucleus. Functionally, transmembrane ligand protein of NOTCH1, NOTCH2 and NOTCH3 receptors that binds the extracellular domain (ECD) of Notch receptor in a cis and trans fashion manner. Following transinteraction, ligand cells produce mechanical force that depends of a clathrin-mediated endocytosis, requiring ligand ubiquitination, EPN1 interaction, and actin polymerisation; these events promote Notch receptor extracellular domain (NECD) transendocytosis and triggers Notch signaling through induction of cleavage, hyperphosphorylation, and nuclear accumulation of the intracellular domain of Notch receptors (NICD). Is required for embryonic development and maintenance of adult stem cells in many different tissues and immune systeme; the DLL1-induced Notch signaling is mediated through an intercellular communication that regulates cell lineage, cell specification, cell patterning and morphogenesis through effects on differentiation and proliferation. Plays a role in brain development at different level, namely by regulating neuronal differentiation of neural precursor cells via cell-cell interaction, most likely through the lateral inhibitory system in an endogenous level dependent-manner. During neocortex development, Dll1-Notch signaling transmission is mediated by dynamic interactions between intermediate neurogenic progenitors and radial glia; the cell-cell interactions are mediated via dynamic and transient elongation processes, likely to reactivate/maintain Notch activity in neighboring progenitors, and coordinate progenitor cell division and differentiation across radial and zonal boundaries. During cerebellar development, regulates Bergmann glial monolayer formation and its morphological maturation through a Notch signaling pathway. At the retina and spinal cord level, regulates neurogenesis by preventing the premature differentiation of neural progenitors and also by maintaining progenitors in spinal cord through Notch signaling pathway. Also controls neurogenesis of the neural tube in a progenitor domain-specific fashion along the dorsoventral axis. Maintains quiescence of neural stem cells and plays a role as a fate determinant that segregates asymmetrically to one daughter cell during neural stem cells mitosis, resulting in neuronal differentiation in Dll1-inheriting cell. Plays a role in immune systeme development, namely the development of all T-cells and marginal zone (MZ) B cells. Blocks the differentiation of progenitor cells into the B-cell lineage while promoting the emergence of a population of cells with the characteristics of a T-cell/NK-cell precursor. Upon MMP14 cleavage, negatively regulates Notch signaling in haematopoietic progenitor cells to specifically maintain normal B-cell development in bone marrow. Also plays a role during muscle development. During early development, inhibits myoblasts differentiation from the medial dermomyotomal lip and later regulates progenitor cell differentiation. Directly modulates cell adhesion and basal lamina formation in satellite cells through Notch signaling. Maintains myogenic progenitors pool by suppressing differentiation through down-regulation of MYOD1 and is required for satellite cell homing and PAX7 expression. During craniofacial and trunk myogenesis suppresses differentiation of cranial mesoderm-derived and somite-derived muscle via MYOD1 regulation but in cranial mesoderm-derived progenitors, is neither required for satellite cell homing nor for PAX7 expression. Also plays a role during pancreatic cell development. During type B pancreatic cell development, may be involved in the initiation of proximodistal patterning in the early pancreatic epithelium. Stimulates multipotent pancreatic progenitor cells proliferation and pancreatic growth by maintaining HES1 expression and PTF1A protein levels. During fetal stages of development, is required to maintain arterial identity and the responsiveness of arterial endothelial cells for VEGFA through regulation of KDR activation and NRP1 expression. Controls sprouting angiogenesis and subsequent vertical branch formation through regulation on tip cell differentiation. Negatively regulates goblet cell differentiation in intestine and controls secretory fat commitment through lateral inhibition in small intestine. Plays a role during inner ear development; negatively regulates auditory hair cell differentiation. Plays a role during nephron development through Notch signaling pathway. Regulates growth, blood pressure and energy homeostasis. This chain is Delta-like protein 1 (Dll1), found in Mus musculus (Mouse).